The sequence spans 757 residues: MTTLHILGFPRVGAKRELKFAQERYWRKELAEQDLLDLAKALREKNWLHQAQADADFVTVGDFTFYDHILDLQVATGAIPARFGFDSQTLSLDQYFQLARGNKEQFAIEMTKWFDTNYHYLVPEFQKNTTFKANPTHYVNQIREAKAAGHQVKPVIVGPLTFLWLGKEKGEAFNRFDLLKQLVPIYFEILTSLAAEGVEWIQIDEPALALDLPQEWLAAYQDVYAQLAKVNAKLLLATYFGSVAEHADLLKALPVDGLHLDLVRAPEQLSAFEDYPKVLSAGVIDGRNIWRANLNRVLDVLEPLKAKFNQRLWIAPSCSLLHTPYDLAVETQLQQNNPELYRWLAFTLQKVAELQVLKQALNAGRSAVAEQLNDSQTAADARANSNVIHKAEVAQRLANLPTNADKRQSPFAERIKLQNKWLNLPLLPTTNIGSFPQTLEIRHARAAFKKGELSLADYEAAMKKEIEFVVRKQEELDLDVLVHGEAERNDMVEYFGELLDGFAFTKFGWVQSYGSRCVKPPVIYGDVTRPEPMTVRWSQYAQSLTDKVMKGMLTGPVTILQWSFVRNDIPRSTVCKQIGVALSDEVLDLEKAGIKVIQIDEPAIREGLPLKRADWDAYLQWAGEAFRLSYMGVKDDTQIHTHMCYSEFNDILPAIAGLDADVITIETSRSDMELLTAFADFKYPNDIGPGVYDIHSPRVPTAGEIEHLLRKALKVIPKERLWVNPDCGLKTRGWKETIEQLQVMVEVTKKLRAELAE.

5-methyltetrahydropteroyltri-L-glutamate is bound by residues 16 to 19 and lysine 112; that span reads RELK. L-homocysteine is bound by residues 432 to 434 and glutamate 485; that span reads IGS. L-methionine-binding positions include 432 to 434 and glutamate 485; that span reads IGS. Residues 516-517 and tryptophan 562 contribute to the 5-methyltetrahydropteroyltri-L-glutamate site; that span reads RC. Residue aspartate 600 coordinates L-homocysteine. Aspartate 600 is an L-methionine binding site. Glutamate 606 is a binding site for 5-methyltetrahydropteroyltri-L-glutamate. The Zn(2+) site is built by histidine 642, cysteine 644, and glutamate 666. The active-site Proton donor is the histidine 695. Cysteine 727 is a Zn(2+) binding site.

It belongs to the vitamin-B12 independent methionine synthase family. Zn(2+) is required as a cofactor.

It catalyses the reaction 5-methyltetrahydropteroyltri-L-glutamate + L-homocysteine = tetrahydropteroyltri-L-glutamate + L-methionine. It participates in amino-acid biosynthesis; L-methionine biosynthesis via de novo pathway; L-methionine from L-homocysteine (MetE route): step 1/1. Catalyzes the transfer of a methyl group from 5-methyltetrahydrofolate to homocysteine resulting in methionine formation. In Actinobacillus pleuropneumoniae serotype 7 (strain AP76), this protein is 5-methyltetrahydropteroyltriglutamate--homocysteine methyltransferase.